The following is a 172-amino-acid chain: MFDIFTRVVSQADARGEFISSDKLEALKKVVAEGTKRSDAVSRMTNNASSIVTNAARQLFADQPQLIAPGGNAYTNRRMAACLRDMEIILRYVTYATFTGDASVLNDRCLNGLRETYVALGVPGASVAAGVRAMGKAAVAIVMDPAGVTSGDCSSLQQEIELYFETAAKAVE.

Residue Asn-72 is modified to N4-methylasparagine. The (2R,3E)-phycocyanobilin site is built by Cys-82 and Cys-153.

The protein belongs to the phycobiliprotein family. As to quaternary structure, heterodimer of an alpha and a beta subunit, which further assembles into trimers and the trimers into hexamers. Post-translationally, contains two covalently linked bilin chromophores. The chromophore on position 82 is added by the phycocyanobilin lyase CpcUS, while the chromophore on position 153 is added by the phycocyanobilin lyase CpcT.

The protein resides in the cellular thylakoid membrane. Light-harvesting photosynthetic bile pigment-protein from the phycobiliprotein complex (phycobilisome, PBS). Phycocyanin is the major phycobiliprotein in the PBS rod. The polypeptide is C-phycocyanin subunit beta (cpcB) (Picosynechococcus sp. (strain ATCC 27264 / PCC 7002 / PR-6) (Agmenellum quadruplicatum)).